The primary structure comprises 196 residues: MEVILLERIPRLGQMGDVVRVKDGFARNFLLRQGKALRANDANRKKFESQRVELEARNLERKSEAQAVAEKLDGKSFVVIRSAAETGQLYGSVSARDIADVVASEGFKIGRNQVDINQPIKTIGLTNVAIALHPEVVATVTLNIARSADEAERQARGETLDSAEAIYGEEINESARPEAFFDPEAEIEQEEGEENA.

The interval 172-196 (NESARPEAFFDPEAEIEQEEGEENA) is disordered. Positions 181 to 196 (FDPEAEIEQEEGEENA) are enriched in acidic residues.

The protein belongs to the bacterial ribosomal protein bL9 family.

Its function is as follows. Binds to the 23S rRNA. This is Large ribosomal subunit protein bL9 from Chelativorans sp. (strain BNC1).